Here is a 278-residue protein sequence, read N- to C-terminus: MQIMLCAISNIASGNCSEDCKYCTQSAHVKTDIQKYRRKELSQIVLEAKMAKKNEALGFCLVTAGLGLDDEKLEYVCEAAKAVQKEVPNLLLIACNGMASVEQLKELKKAGIFSYNHNLETSKEFFPQICTTHTWESRFQTNLNAKEAGLMLCCGGIYGMGESEEDRLSFRKSLQELQPFSTPINFFIANENLKLQVPRLSADEALKIVRDTKEALPQSVVMVAGGREVVLQERQYEIFQAGAGAIVIGDYLTTKGEEPSQDIIKLKEMGFTFASECH.

Positions 1–227 (MQIMLCAISN…QSVVMVAGGR (227 aa)) constitute a Radical SAM core domain. The [4Fe-4S] cluster site is built by C16, C20, and C23. The [2Fe-2S] cluster site is built by C60, C95, and C153.

This sequence belongs to the radical SAM superfamily. Biotin synthase family. Homodimer. [4Fe-4S] cluster is required as a cofactor. [2Fe-2S] cluster serves as cofactor.

The enzyme catalyses (4R,5S)-dethiobiotin + (sulfur carrier)-SH + 2 reduced [2Fe-2S]-[ferredoxin] + 2 S-adenosyl-L-methionine = (sulfur carrier)-H + biotin + 2 5'-deoxyadenosine + 2 L-methionine + 2 oxidized [2Fe-2S]-[ferredoxin]. It functions in the pathway cofactor biosynthesis; biotin biosynthesis; biotin from 7,8-diaminononanoate: step 2/2. In terms of biological role, catalyzes the conversion of dethiobiotin (DTB) to biotin by the insertion of a sulfur atom into dethiobiotin via a radical-based mechanism. The chain is Biotin synthase from Campylobacter jejuni subsp. jejuni serotype O:6 (strain 81116 / NCTC 11828).